The chain runs to 299 residues: Acetylglutamate kinase (299 aa).

Residues 72–73, arginine 94, and asparagine 196 each bind substrate; that span reads GG.

It belongs to the acetylglutamate kinase family. ArgB subfamily.

Its subcellular location is the cytoplasm. It catalyses the reaction N-acetyl-L-glutamate + ATP = N-acetyl-L-glutamyl 5-phosphate + ADP. It participates in amino-acid biosynthesis; L-arginine biosynthesis; N(2)-acetyl-L-ornithine from L-glutamate: step 2/4. Catalyzes the ATP-dependent phosphorylation of N-acetyl-L-glutamate. The protein is Acetylglutamate kinase of Burkholderia cenocepacia (strain ATCC BAA-245 / DSM 16553 / LMG 16656 / NCTC 13227 / J2315 / CF5610) (Burkholderia cepacia (strain J2315)).